The following is a 235-amino-acid chain: Probable inactive serine protease 37 (235 aa).

The first 19 residues, 1–19 (MKFTFCLTVLAGTFFSAHS), serve as a signal peptide directing secretion. One can recognise a Peptidase S1 domain in the interval 20-233 (SVQKDDPSPY…YVSWIESTTK (214 aa)). 3 cysteine pairs are disulfide-bonded: cysteine 40-cysteine 56, cysteine 131-cysteine 198, and cysteine 163-cysteine 177.

This sequence belongs to the peptidase S1 family.

The protein localises to the cytoplasmic vesicle. It is found in the secretory vesicle. The protein resides in the acrosome. It localises to the secreted. Its function is as follows. Plays a role in male fertility. May have a role in sperm migration or binding to zona-intact eggs. Involved in the activation of the proacrosin/acrosin system. This Bos taurus (Bovine) protein is Probable inactive serine protease 37.